We begin with the raw amino-acid sequence, 208 residues long: Cytidylate kinase (208 aa).

9–17 (GPSASGKSS) lines the ATP pocket.

It belongs to the cytidylate kinase family. Type 1 subfamily.

The protein resides in the cytoplasm. The catalysed reaction is CMP + ATP = CDP + ADP. It catalyses the reaction dCMP + ATP = dCDP + ADP. The chain is Cytidylate kinase from Thermus thermophilus (strain ATCC BAA-163 / DSM 7039 / HB27).